The primary structure comprises 221 residues: Octanoyltransferase (221 aa).

The 187-residue stretch at 35 to 221 (ESYENRIIFC…RELLAALLSK (187 aa)) folds into the BPL/LPL catalytic domain. Substrate is bound by residues 80–87 (RGGDITYH), 152–154 (AIG), and 165–167 (GLA). C183 acts as the Acyl-thioester intermediate in catalysis.

The protein belongs to the LipB family.

The protein resides in the cytoplasm. It carries out the reaction octanoyl-[ACP] + L-lysyl-[protein] = N(6)-octanoyl-L-lysyl-[protein] + holo-[ACP] + H(+). The protein operates within protein modification; protein lipoylation via endogenous pathway; protein N(6)-(lipoyl)lysine from octanoyl-[acyl-carrier-protein]: step 1/2. Functionally, catalyzes the transfer of endogenously produced octanoic acid from octanoyl-acyl-carrier-protein onto the lipoyl domains of lipoate-dependent enzymes. Lipoyl-ACP can also act as a substrate although octanoyl-ACP is likely to be the physiological substrate. The sequence is that of Octanoyltransferase from Bacteroides fragilis (strain YCH46).